A 145-amino-acid polypeptide reads, in one-letter code: Hemoglobin subunit beta-3 (145 aa).

The region spanning 1 to 145 (MLTAEEKAAV…VANALAHRYH (145 aa)) is the Globin domain. T11 carries the post-translational modification Phosphothreonine. At K58 the chain carries N6-acetyllysine. H62 is a heme b binding site. K81 carries the N6-acetyllysine modification. H91 provides a ligand contact to heme b. C92 bears the S-nitrosocysteine mark.

Belongs to the globin family. As to quaternary structure, heterotetramer of two alpha chains and two beta chains. As to expression, red blood cells.

In terms of biological role, involved in oxygen transport from the lung to the various peripheral tissues. The sequence is that of Hemoglobin subunit beta-3 (HBB) from Odocoileus virginianus virginianus (Virginia white-tailed deer).